The sequence spans 123 residues: ATP synthase epsilon chain (123 aa).

This sequence belongs to the ATPase epsilon chain family. In terms of assembly, F-type ATPases have 2 components, CF(1) - the catalytic core - and CF(0) - the membrane proton channel. CF(1) has five subunits: alpha(3), beta(3), gamma(1), delta(1), epsilon(1). CF(0) has three main subunits: a, b and c.

It is found in the cell inner membrane. Its function is as follows. Produces ATP from ADP in the presence of a proton gradient across the membrane. The chain is ATP synthase epsilon chain from Helicobacter acinonychis (strain Sheeba).